Here is a 309-residue protein sequence, read N- to C-terminus: Ketosamine-3-kinase (309 aa).

Ser20 is subject to Phosphoserine. An ATP-binding site is contributed by 89–91; sequence EHL. Asp217 serves as the catalytic Proton acceptor.

Belongs to the fructosamine kinase family.

The catalysed reaction is N(6)-D-ribulosyl-L-lysyl-[protein] + ATP = N(6)-(3-O-phospho-D-ribulosyl)-L-lysyl-[protein] + ADP + H(+). It carries out the reaction N(6)-(D-psicosyl)-L-lysyl-[protein] + ATP = N(6)-(3-O-phospho-D-psicosyl)-L-lysyl-[protein] + ADP + H(+). Its function is as follows. Ketosamine-3-kinase involved in protein deglycation by mediating phosphorylation of ribuloselysine and psicoselysine on glycated proteins, to generate ribuloselysine-3 phosphate and psicoselysine-3 phosphate, respectively. Ribuloselysine-3 phosphate and psicoselysine-3 phosphate adducts are unstable and decompose under physiological conditions. Not able to phosphorylate fructoselysine. The chain is Ketosamine-3-kinase from Mus musculus (Mouse).